The primary structure comprises 467 residues: Interleukin-6 receptor subunit alpha (467 aa).

The signal sequence occupies residues methionine 1 to alanine 19. Residues leucine 20–alanine 112 enclose the Ig-like C2-type domain. The Extracellular portion of the chain corresponds to leucine 20–proline 365. Cystine bridges form between cysteine 25–cysteine 193, cysteine 47–cysteine 96, cysteine 121–cysteine 132, and cysteine 165–cysteine 176. N-linked (GlcNAc...) asparagine glycans are attached at residues asparagine 55 and asparagine 93. 2 consecutive Fibronectin type-III domains span residues proline 113–aspartate 217 and proline 218–threonine 316. N-linked (GlcNAc...) asparagine glycosylation is found at asparagine 221 and asparagine 245. The WSXWS motif signature appears at tryptophan 303–serine 307. The segment at tryptophan 315–glutamine 357 is disordered. 2 stretches are compositionally biased toward polar residues: residues glutamate 317–threonine 336 and lysine 346–glutamine 357. N-linked (GlcNAc...) asparagine glycosylation is present at asparagine 350. A glycan (O-linked (GlcNAc) threonine) is linked at threonine 352. The chain crosses the membrane as a helical span at residues threonine 366–leucine 386. The Cytoplasmic portion of the chain corresponds to arginine 387–arginine 467. Residues isoleucine 428 to arginine 467 are disordered.

It belongs to the type I cytokine receptor family. Type 3 subfamily. In terms of assembly, component of a hexamer of two molecules each of IL6, IL6R and IL6ST; first binds to IL6 to associate with the signaling subunit IL6ST. Interacts (via N-terminal ectodomain) with SORL1; this interaction may affect IL6-binding to IL6R, hence decrease IL6 'classic-signaling'. Also interacts with SORL1; this interaction leads to soluble IL6R internalization. May form a trimeric complex with the soluble SORL1 ectodomain and circulating IL6 receptor; this interaction might stabilize circulating IL6, hence promote IL6 'trans-signaling'. A short soluble form is also released from the membrane by proteolysis. The sIL6R is formed by limited proteolysis of membrane-bound receptors, a process referred to as ectodomain shedding. mIL6R is cleaved by the proteases ADAM10 and ADAM17. In terms of processing, glycosylated. Glycosylation is dispensable for transport, signaling, and cell-surface turnover. Glycosylation at Asn-55 is a protease-regulatory exosite. Glycosylation is required for ADAM17-mediated proteolysis. Expressed in liver.

It is found in the cell membrane. The protein localises to the secreted. With respect to regulation, classic and trans-signaling are both inhibited by tocilizumab, a humanized monoclonal antibody that blocks interleukin IL6R signaling. Functionally, part of the receptor for interleukin 6. Binds to IL6 with low affinity, but does not transduce a signal. Signal activation necessitate an association with IL6ST. Activation leads to the regulation of the immune response, acute-phase reactions and hematopoiesis. The interaction with membrane-bound IL6R and IL6ST stimulates 'classic signaling', the restricted expression of the IL6R limits classic IL6 signaling to only a few tissues such as the liver and some cells of the immune system. Whereas the binding of IL6 and soluble IL6R to IL6ST stimulates 'trans-signaling'. Alternatively, 'cluster signaling' occurs when membrane-bound IL6:IL6R complexes on transmitter cells activate IL6ST receptors on neighboring receiver cells. Its function is as follows. Signaling via the membrane-bound IL6R is mostly regenerative and anti-inflammatory. Drives naive CD4(+) T cells to the Th17 lineage, through 'cluster signaling' by dendritic cells. Soluble form of IL6 receptor (sIL6R) that acts as an agonist of IL6 activity. The IL6:sIL6R complex (hyper-IL6) binds to IL6ST/gp130 on cell surfaces and induces signaling also on cells that do not express membrane-bound IL6R in a process called IL6 'trans-signaling'. sIL6R is causative for the pro-inflammatory properties of IL6 and an important player in the development of chronic inflammatory diseases. In complex with IL6, is required for induction of VEGF production. Plays a protective role during liver injury, being required for maintenance of tissue regeneration. 'Trans-signaling' in central nervous system regulates energy and glucose homeostasis. In Sus scrofa (Pig), this protein is Interleukin-6 receptor subunit alpha (IL6R).